The chain runs to 330 residues: tRNA-modifying protein YgfZ (330 aa).

Residues Trp28 and Trp190 each contribute to the folate site.

It belongs to the tRNA-modifying YgfZ family.

The protein localises to the cytoplasm. Its function is as follows. Folate-binding protein involved in regulating the level of ATP-DnaA and in the modification of some tRNAs. It is probably a key factor in regulatory networks that act via tRNA modification, such as initiation of chromosomal replication. This Yersinia enterocolitica serotype O:8 / biotype 1B (strain NCTC 13174 / 8081) protein is tRNA-modifying protein YgfZ.